A 497-amino-acid chain; its full sequence is Glycerol kinase (497 aa).

Threonine 12 contacts ADP. 3 residues coordinate ATP: threonine 12, threonine 13, and serine 14. A sn-glycerol 3-phosphate-binding site is contributed by threonine 12. Residue arginine 16 coordinates ADP. Residues arginine 82, glutamate 83, tyrosine 134, and aspartate 243 each coordinate sn-glycerol 3-phosphate. Residues arginine 82, glutamate 83, tyrosine 134, aspartate 243, and glutamine 244 each coordinate glycerol. ADP-binding residues include threonine 265 and glycine 308. The ATP site is built by threonine 265, glycine 308, glutamine 312, and glycine 409. Residues glycine 409 and asparagine 413 each contribute to the ADP site.

The protein belongs to the FGGY kinase family.

The enzyme catalyses glycerol + ATP = sn-glycerol 3-phosphate + ADP + H(+). Its pathway is polyol metabolism; glycerol degradation via glycerol kinase pathway; sn-glycerol 3-phosphate from glycerol: step 1/1. Its activity is regulated as follows. Inhibited by fructose 1,6-bisphosphate (FBP). Its function is as follows. Key enzyme in the regulation of glycerol uptake and metabolism. Catalyzes the phosphorylation of glycerol to yield sn-glycerol 3-phosphate. In Nitratidesulfovibrio vulgaris (strain ATCC 29579 / DSM 644 / CCUG 34227 / NCIMB 8303 / VKM B-1760 / Hildenborough) (Desulfovibrio vulgaris), this protein is Glycerol kinase.